Here is a 220-residue protein sequence, read N- to C-terminus: uncharacterized protein (220 aa).

It belongs to the DadA oxidoreductase family. The cofactor is FAD.

This is an uncharacterized protein from Halorhodospira halophila (Ectothiorhodospira halophila).